Consider the following 169-residue polypeptide: Crossover junction endodeoxyribonuclease RuvC (169 aa).

Residues D12, E72, and D144 contribute to the active site. The Mg(2+) site is built by D12, E72, and D144.

This sequence belongs to the RuvC family. Homodimer which binds Holliday junction (HJ) DNA. The HJ becomes 2-fold symmetrical on binding to RuvC with unstacked arms; it has a different conformation from HJ DNA in complex with RuvA. In the full resolvosome a probable DNA-RuvA(4)-RuvB(12)-RuvC(2) complex forms which resolves the HJ. Mg(2+) serves as cofactor.

The protein resides in the cytoplasm. It carries out the reaction Endonucleolytic cleavage at a junction such as a reciprocal single-stranded crossover between two homologous DNA duplexes (Holliday junction).. Its function is as follows. The RuvA-RuvB-RuvC complex processes Holliday junction (HJ) DNA during genetic recombination and DNA repair. Endonuclease that resolves HJ intermediates. Cleaves cruciform DNA by making single-stranded nicks across the HJ at symmetrical positions within the homologous arms, yielding a 5'-phosphate and a 3'-hydroxyl group; requires a central core of homology in the junction. The consensus cleavage sequence is 5'-(A/T)TT(C/G)-3'. Cleavage occurs on the 3'-side of the TT dinucleotide at the point of strand exchange. HJ branch migration catalyzed by RuvA-RuvB allows RuvC to scan DNA until it finds its consensus sequence, where it cleaves and resolves the cruciform DNA. The polypeptide is Crossover junction endodeoxyribonuclease RuvC (Azorhizobium caulinodans (strain ATCC 43989 / DSM 5975 / JCM 20966 / LMG 6465 / NBRC 14845 / NCIMB 13405 / ORS 571)).